The following is a 395-amino-acid chain: Putative 8-amino-7-oxononanoate synthase (395 aa).

Arg-23 contacts substrate. 110–111 (GY) provides a ligand contact to pyridoxal 5'-phosphate. His-135 serves as a coordination point for substrate. Residues Ser-182, 207-210 (DEAH), and 239-242 (TFSK) contribute to the pyridoxal 5'-phosphate site. Lys-242 carries the post-translational modification N6-(pyridoxal phosphate)lysine. A substrate-binding site is contributed by Thr-356.

The protein belongs to the class-II pyridoxal-phosphate-dependent aminotransferase family. BioF subfamily. In terms of assembly, homodimer. It depends on pyridoxal 5'-phosphate as a cofactor.

The catalysed reaction is 6-carboxyhexanoyl-[ACP] + L-alanine + H(+) = (8S)-8-amino-7-oxononanoate + holo-[ACP] + CO2. Its pathway is cofactor biosynthesis; biotin biosynthesis. In terms of biological role, catalyzes the decarboxylative condensation of pimeloyl-[acyl-carrier protein] and L-alanine to produce 8-amino-7-oxononanoate (AON), [acyl-carrier protein], and carbon dioxide. This chain is Putative 8-amino-7-oxononanoate synthase (bioF), found in Bacillus cereus (strain G9842).